A 313-amino-acid polypeptide reads, in one-letter code: Fucose-specific lectin (313 aa).

6 consecutive repeat copies span residues Phe-5–Glu-57, Ala-58–Lys-109, Val-110–Ser-162, Thr-163–Ser-208, Ala-209–Pro-260, and Ser-261–Val-304. Residues Phe-5 to Val-304 are 6 X approximate tandem repeats. Beta-L-fucose contacts are provided by Arg-25, Glu-37, Arg-78, Glu-90, Trp-98, Gln-102, Arg-132, Glu-147, and Trp-154. Residues Arg-78 and Glu-90 each coordinate alpha-L-fucose. Residue Gln-102 participates in alpha-L-fucose binding. Alpha-L-fucose is bound by residues Trp-154, Arg-180, and Glu-192. Trp-200 contributes to the beta-L-fucose binding site. Gly-204 provides a ligand contact to alpha-L-fucose. 2 residues coordinate beta-L-fucose: Arg-227 and Glu-239. Alpha-L-fucose is bound at residue Trp-246. Trp-299 serves as a coordination point for beta-L-fucose.

This sequence belongs to the fungal fucose-specific lectin family. In terms of assembly, forms homodimers. The two AAL monomers are associated via interactions between N-terminal and C-terminal peptides. Tyr-7 interacts via aromatic ring stacking with its counterpart on the other monomer, whereas Ser-284 interacts via hydrogen bonding with Asp-264 on the other monomer.

Functionally, lectin that specifically binds to L-fucose. Has strongest preference for the alpha-1,6-fucosylated chain (core fucose) on glycoproteins among alpha-1,2-, alpha-1,3-, alpha-1,4-, and alpha-1,6-fucosylated chains. Might play a role in the differentiation of the fruiting body. Exhibits antifungal activity against Mucor racemosus and thus could act as an antifungal protein in natural ecosystems. This is Fucose-specific lectin from Aleuria aurantia (Orange peel mushroom).